Reading from the N-terminus, the 319-residue chain is Acetyl-coenzyme A carboxylase carboxyl transferase subunit alpha (319 aa).

The CoA carboxyltransferase C-terminal domain occupies lysine 39–glutamate 293.

Belongs to the AccA family. As to quaternary structure, acetyl-CoA carboxylase is a heterohexamer composed of biotin carboxyl carrier protein (AccB), biotin carboxylase (AccC) and two subunits each of ACCase subunit alpha (AccA) and ACCase subunit beta (AccD).

The protein localises to the cytoplasm. It carries out the reaction N(6)-carboxybiotinyl-L-lysyl-[protein] + acetyl-CoA = N(6)-biotinyl-L-lysyl-[protein] + malonyl-CoA. Its pathway is lipid metabolism; malonyl-CoA biosynthesis; malonyl-CoA from acetyl-CoA: step 1/1. Its function is as follows. Component of the acetyl coenzyme A carboxylase (ACC) complex. First, biotin carboxylase catalyzes the carboxylation of biotin on its carrier protein (BCCP) and then the CO(2) group is transferred by the carboxyltransferase to acetyl-CoA to form malonyl-CoA. The chain is Acetyl-coenzyme A carboxylase carboxyl transferase subunit alpha from Geobacter sulfurreducens (strain ATCC 51573 / DSM 12127 / PCA).